The sequence spans 166 residues: 2-C-methyl-D-erythritol 2,4-cyclodiphosphate synthase (166 aa).

A divalent metal cation-binding residues include Asp-15 and His-17. 4-CDP-2-C-methyl-D-erythritol 2-phosphate contacts are provided by residues 15–17 (DIH) and 43–44 (HS). An a divalent metal cation-binding site is contributed by His-51. 4-CDP-2-C-methyl-D-erythritol 2-phosphate is bound by residues 65-67 (DIG), 141-144 (TTNE), and Arg-151.

Belongs to the IspF family. As to quaternary structure, homotrimer. The cofactor is a divalent metal cation.

The catalysed reaction is 4-CDP-2-C-methyl-D-erythritol 2-phosphate = 2-C-methyl-D-erythritol 2,4-cyclic diphosphate + CMP. It functions in the pathway isoprenoid biosynthesis; isopentenyl diphosphate biosynthesis via DXP pathway; isopentenyl diphosphate from 1-deoxy-D-xylulose 5-phosphate: step 4/6. In terms of biological role, involved in the biosynthesis of isopentenyl diphosphate (IPP) and dimethylallyl diphosphate (DMAPP), two major building blocks of isoprenoid compounds. Catalyzes the conversion of 4-diphosphocytidyl-2-C-methyl-D-erythritol 2-phosphate (CDP-ME2P) to 2-C-methyl-D-erythritol 2,4-cyclodiphosphate (ME-CPP) with a corresponding release of cytidine 5-monophosphate (CMP). In Prochlorococcus marinus (strain MIT 9215), this protein is 2-C-methyl-D-erythritol 2,4-cyclodiphosphate synthase.